We begin with the raw amino-acid sequence, 472 residues long: Sarcalumenin (472 aa).

The signal sequence occupies residues 1 to 20; sequence MKRLNLLCCCVASLLLLGTA. An N-linked (GlcNAc...) asparagine glycan is attached at Leu-59. One can recognise a Dynamin-type G domain in the interval 89–330; that stretch reads ITSKPMVLFL…IENRMENKIA (242 aa). A G1 motif region spans residues 99–106; sequence GPWSVGKS. Positions 127–128 are G2 motif; sequence EP. Residues 189–192 are G3 motif; it reads DTPG. The G4 motif stretch occupies residues 254-257; it reads NKAD. Residue Leu-278 is a region of interest, G5 motif. 2 N-linked (GlcNAc...) asparagine glycosylation sites follow: Asn-280 and Asn-388.

Belongs to the TRAFAC class dynamin-like GTPase superfamily. Dynamin/Fzo/YdjA family. Post-translationally, N-glycosylated.

It localises to the sarcoplasmic reticulum lumen. The protein localises to the sarcoplasmic reticulum membrane. The protein is Sarcalumenin (SRL) of Gallus gallus (Chicken).